A 238-amino-acid polypeptide reads, in one-letter code: Orotidine 5'-phosphate decarboxylase (238 aa).

Substrate contacts are provided by residues aspartate 10, lysine 32, 59–68 (DLKLHDIPNT), threonine 122, arginine 184, glutamine 193, glycine 213, and arginine 214. The active-site Proton donor is lysine 61.

This sequence belongs to the OMP decarboxylase family. Type 1 subfamily. As to quaternary structure, homodimer.

It catalyses the reaction orotidine 5'-phosphate + H(+) = UMP + CO2. It functions in the pathway pyrimidine metabolism; UMP biosynthesis via de novo pathway; UMP from orotate: step 2/2. Catalyzes the decarboxylation of orotidine 5'-monophosphate (OMP) to uridine 5'-monophosphate (UMP). The sequence is that of Orotidine 5'-phosphate decarboxylase from Bacillus cereus (strain AH820).